Consider the following 238-residue polypeptide: Valine-rich protein (238 aa).

The N-terminal stretch at 1–16 is a signal peptide; sequence MQAVLLVVALFGAALA.

In terms of tissue distribution, prismatic layer of shell (at protein level). Expressed primarily in the mantle with highest level in the mantle edge and lower level in the mantle pallium.

It localises to the secreted. The protein is Valine-rich protein of Pinctada maxima (Silver-lipped pearl oyster).